The chain runs to 206 residues: Max dimerization protein 3 (206 aa).

Residues 8–25 (IQVLLQAAEFLERREREA) are interaction with SIN3A and SIN3B. 2 disordered regions span residues 29 to 66 (YASL…NELE) and 122 to 171 (KLRS…QEDL). One can recognise a bHLH domain in the interval 57–109 (SGRSVHNELEKRRRAQLKRCLEQLRQQMPLGVDCTRYTTLSLLRRARVHIQKL). Over residues 126 to 138 (KQQSLQQQLEQLQ) the composition is skewed to low complexity. Residues 143–153 (ARERERLRADS) show a composition bias toward basic and acidic residues.

In terms of assembly, efficient DNA binding requires dimerization with another bHLH protein. Binds DNA as a heterodimer with MAX. Interacts with SIN3A AND SIN3B. Interacts with RNF17. Expressed only in the proliferating areas of the testis and thymus.

Its subcellular location is the nucleus. Functionally, transcriptional repressor. Binds with MAX to form a sequence-specific DNA-binding protein complex which recognizes the core sequence 5'-CAC[GA]TG-3'. Antagonizes MYC transcriptional activity by competing for MAX and suppresses MYC dependent cell transformation. This chain is Max dimerization protein 3 (Mxd3), found in Mus musculus (Mouse).